A 235-amino-acid polypeptide reads, in one-letter code: Octanoyltransferase (235 aa).

The region spanning 28–203 (GRAEETLLLL…PFAGLPADAL (176 aa)) is the BPL/LPL catalytic domain. Substrate contacts are provided by residues 66 to 73 (RGGDVTWH), 133 to 135 (SIG), and 146 to 148 (GFA). C164 (acyl-thioester intermediate) is an active-site residue. Residues 202-235 (ALPEQPRDAVQPSSCDDVHAPSTTSRRPPCPLTV) are disordered.

It belongs to the LipB family.

The protein localises to the cytoplasm. The enzyme catalyses octanoyl-[ACP] + L-lysyl-[protein] = N(6)-octanoyl-L-lysyl-[protein] + holo-[ACP] + H(+). The protein operates within protein modification; protein lipoylation via endogenous pathway; protein N(6)-(lipoyl)lysine from octanoyl-[acyl-carrier-protein]: step 1/2. Its function is as follows. Catalyzes the transfer of endogenously produced octanoic acid from octanoyl-acyl-carrier-protein onto the lipoyl domains of lipoate-dependent enzymes. Lipoyl-ACP can also act as a substrate although octanoyl-ACP is likely to be the physiological substrate. The polypeptide is Octanoyltransferase (Geobacter sulfurreducens (strain ATCC 51573 / DSM 12127 / PCA)).